Consider the following 644-residue polypeptide: 3D-(3,5/4)-trihydroxycyclohexane-1,2-dione hydrolase (644 aa).

Position 65 (Glu-65) interacts with thiamine diphosphate. A thiamine pyrophosphate binding region spans residues Ser-442–Gly-522. 2 residues coordinate Mg(2+): Asp-493 and Asn-520.

It belongs to the TPP enzyme family. It depends on Mg(2+) as a cofactor. Thiamine diphosphate is required as a cofactor.

It carries out the reaction 3D-3,5/4-trihydroxycyclohexane-1,2-dione + H2O = 5-deoxy-D-glucuronate + H(+). The protein operates within polyol metabolism; myo-inositol degradation into acetyl-CoA; acetyl-CoA from myo-inositol: step 3/7. Its function is as follows. Involved in the cleavage of the C1-C2 bond of 3D-(3,5/4)-trihydroxycyclohexane-1,2-dione (THcHDO) to yield 5-deoxy-glucuronate (5DG). This chain is 3D-(3,5/4)-trihydroxycyclohexane-1,2-dione hydrolase, found in Bacillus thuringiensis (strain Al Hakam).